The following is a 280-amino-acid chain: Suppressor of disruption of TFIIS (280 aa).

The protein belongs to the SSM1 family.

Its function is as follows. Could be an enzyme that inactivates 6-azauracil by modifying it. The protein is Suppressor of disruption of TFIIS (SDT1) of Saccharomyces cerevisiae (strain ATCC 204508 / S288c) (Baker's yeast).